Consider the following 351-residue polypeptide: Small ribosomal subunit protein uS2 (351 aa).

The disordered stretch occupies residues 302–351 (QNNYDPSKRGYNPKYVNHKSTFNKFNNKKPAEATSQAKTNEKIVIKAETN). Over residues 340-351 (TNEKIVIKAETN) the composition is skewed to basic and acidic residues.

Belongs to the universal ribosomal protein uS2 family.

The polypeptide is Small ribosomal subunit protein uS2 (Ureaplasma urealyticum serovar 10 (strain ATCC 33699 / Western)).